The primary structure comprises 503 residues: Cobyric acid synthase (503 aa).

Residues 251–450 (DLDIAVIRLP…IHGIFENAAF (200 aa)) enclose the GATase cobBQ-type domain. C331 (nucleophile) is an active-site residue. H442 is an active-site residue.

This sequence belongs to the CobB/CobQ family. CobQ subfamily.

It participates in cofactor biosynthesis; adenosylcobalamin biosynthesis. Its function is as follows. Catalyzes amidations at positions B, D, E, and G on adenosylcobyrinic A,C-diamide. NH(2) groups are provided by glutamine, and one molecule of ATP is hydrogenolyzed for each amidation. This is Cobyric acid synthase from Dehalococcoides mccartyi (strain CBDB1).